Reading from the N-terminus, the 224-residue chain is Phosphoglycolate phosphatase (224 aa).

Catalysis depends on D10, which acts as the Nucleophile. D10, D12, and D176 together coordinate Mg(2+).

Belongs to the HAD-like hydrolase superfamily. CbbY/CbbZ/Gph/YieH family. Mg(2+) is required as a cofactor.

It carries out the reaction 2-phosphoglycolate + H2O = glycolate + phosphate. The protein operates within organic acid metabolism; glycolate biosynthesis; glycolate from 2-phosphoglycolate: step 1/1. Functionally, specifically catalyzes the dephosphorylation of 2-phosphoglycolate. Is involved in the dissimilation of the intracellular 2-phosphoglycolate formed during the DNA repair of 3'-phosphoglycolate ends, a major class of DNA lesions induced by oxidative stress. The protein is Phosphoglycolate phosphatase of Pasteurella multocida (strain Pm70).